The primary structure comprises 210 residues: MSERGLLIVFSGPSGVGKGTVRQEIFSTPDHQFEYSVSMTTRPQRLGEIDGVDYFFRTREEFEELIKQGQMLEYAEYVGNYYGTPLTYVNETLDKGIDVFLEIEVQGALQVKQKVPDGVFIFLTPPDLAELKDRLVGRGTDSQEVIAQRIERAKEEIALMREYDYAVVNDEVKLAAERVKHIIETEHFRVERVIGRYHKMINEELPLPLR.

The Guanylate kinase-like domain maps to Gly5–Glu184. An ATP-binding site is contributed by Gly12–Gly19.

It belongs to the guanylate kinase family.

Its subcellular location is the cytoplasm. The enzyme catalyses GMP + ATP = GDP + ADP. In terms of biological role, essential for recycling GMP and indirectly, cGMP. This Streptococcus mutans serotype c (strain ATCC 700610 / UA159) protein is Guanylate kinase.